Consider the following 384-residue polypeptide: S-adenosylmethionine synthase (384 aa).

His-15 is an ATP binding site. Residue Asp-17 participates in Mg(2+) binding. Glu-43 provides a ligand contact to K(+). L-methionine-binding residues include Glu-56 and Gln-99. The flexible loop stretch occupies residues 99-109 (QSSDINQGVDR). Residues 164-166 (DAK), 230-231 (RF), Asp-239, 245-246 (RK), Ala-262, and Lys-266 contribute to the ATP site. Residue Asp-239 coordinates L-methionine. Lys-270 is a binding site for L-methionine.

Belongs to the AdoMet synthase family. As to quaternary structure, homotetramer; dimer of dimers. The cofactor is Mg(2+). K(+) serves as cofactor.

Its subcellular location is the cytoplasm. The catalysed reaction is L-methionine + ATP + H2O = S-adenosyl-L-methionine + phosphate + diphosphate. The protein operates within amino-acid biosynthesis; S-adenosyl-L-methionine biosynthesis; S-adenosyl-L-methionine from L-methionine: step 1/1. Functionally, catalyzes the formation of S-adenosylmethionine (AdoMet) from methionine and ATP. The overall synthetic reaction is composed of two sequential steps, AdoMet formation and the subsequent tripolyphosphate hydrolysis which occurs prior to release of AdoMet from the enzyme. The chain is S-adenosylmethionine synthase from Histophilus somni (strain 129Pt) (Haemophilus somnus).